The chain runs to 63 residues: DNA-directed RNA polymerase 7 kDa subunit (63 aa).

It belongs to the poxviridae DNA-directed RNA polymerase 7 kDa subunit family. In terms of assembly, the DNA-dependent RNA polymerase (vRNAP) consists of eight subunits encoded by early viral genes and termed according to their apparent molecular masses Rpo147, Rpo132, Rpo35, Rpo30, Rpo22, Rpo19, Rpo18, and Rpo7. The same holoenzyme, with the addition of the transcription-specificity factor RAP94, is used for early gene expression.

The protein localises to the virion. It catalyses the reaction RNA(n) + a ribonucleoside 5'-triphosphate = RNA(n+1) + diphosphate. Functionally, part of the DNA-dependent RNA polymerase which catalyzes the transcription of viral DNA into RNA using the four ribonucleoside triphosphates as substrates. Responsible for the transcription of early, intermediate and late genes. DNA-dependent RNA polymerase associates with the early transcription factor (ETF), itself composed of OPG118 and OPG134, thereby allowing the early genes transcription. Late transcription, and probably also intermediate transcription, require newly synthesized RNA polymerase. This is DNA-directed RNA polymerase 7 kDa subunit (OPG090) from Homo sapiens (Human).